Reading from the N-terminus, the 735-residue chain is 2-5A-dependent ribonuclease (735 aa).

Residues 1 to 21 (METPDYNTPQGGTPSAGSQRT) are disordered. ANK repeat units lie at residues 24 to 53 (EDDS…DANA), 58 to 87 (WGWT…DPHR), 91 to 120 (NGAT…DVNE), 124 to 153 (NGFT…NVNL), 167 to 197 (GGAT…EVDA), 201 to 234 (MGRN…DVNV), 238 to 268 (RGKT…NIDA), 272 to 301 (EGKT…DKCD), and 303 to 328 (LVWI…NPDT). Residues 26 to 51 (DSSLIKAVQKGDVVRVQQLLEKGADA) are binding to TMEV Leader protein. 2-5A binding (P-loop) stretches follow at residues 229–242 (GADV…GKTP) and 253–275 (GLVQ…EGKT). The Protein kinase domain maps to 364-584 (IHDDYKIAGT…LVDLLGHPFF (221 aa)). Residues 401–436 (CKEVSCLRDCGDHSNLVAFYGREDDKGCLYVCVSLC) form a C6-type zinc finger. The KEN domain occupies 587-722 (WENRYRTLRN…KHFPQPPPRL (136 aa)). A disordered region spans residues 714-735 (HFPQPPPRLSVPEAVGPGGIQS).

It belongs to the protein kinase superfamily. In terms of assembly, (Microbial infection) Interacts (via N-terminus) with TMEV leader protein; this interaction prevents RNASEL activation by its substrate 2'-5' oligoadenylates. As to quaternary structure, monomer (inactive form) or homodimer. Interacts with ABCE1; this interaction inhibits the RNASEL. Mn(2+) serves as cofactor. Mg(2+) is required as a cofactor. Expressed in spleen, thymus, lung, testis, kidney, liver and heart.

It is found in the cytoplasm. The protein resides in the mitochondrion. With respect to regulation, after binding to 2-5A (5'-phosphorylated 2',5'-linked oligoadenylates) the homodimerization and subsequent activation occurs. Inhibited by RNASEL inhibitor ABCE1/RLI, a cytoplasmic member of the ATP-binding cassette (ABC) transporter family. Its function is as follows. Endoribonuclease that functions in the interferon (IFN) antiviral response. In INF treated and virus infected cells, RNASEL probably mediates its antiviral effects through a combination of direct cleavage of single-stranded viral RNAs, inhibition of protein synthesis through the degradation of rRNA, induction of apoptosis, and induction of other antiviral genes. RNASEL mediated apoptosis is the result of a JNK-dependent stress-response pathway leading to cytochrome c release from mitochondria and caspase-dependent apoptosis. Therefore, activation of RNASEL could lead to elimination of virus infected cells under some circumstances. In the crosstalk between autophagy and apoptosis proposed to induce autophagy as an early stress response to small double-stranded RNA and at later stages of prolonged stress to activate caspase-dependent proteolytic cleavage of BECN1 to terminate autophagy and promote apoptosis. Might play a central role in the regulation of mRNA turnover. Cleaves 3' of UpNp dimers, with preference for UU and UA sequences, to sets of discrete products ranging from between 4 and 22 nucleotides in length. This is 2-5A-dependent ribonuclease (Rnasel) from Mus musculus (Mouse).